The chain runs to 304 residues: Lipoyl synthase (304 aa).

A disordered region spans residues 1 to 21 (MAPELIQIDLEPRKPAPKPSW). [4Fe-4S] cluster-binding residues include Cys-48, Cys-53, Cys-59, Cys-74, Cys-78, Cys-81, and Ser-287. Residues 60 to 276 (WNHKTATFML…KEEAMKMGFR (217 aa)) form the Radical SAM core domain.

The protein belongs to the radical SAM superfamily. Lipoyl synthase family. Requires [4Fe-4S] cluster as cofactor.

The protein localises to the cytoplasm. It catalyses the reaction [[Fe-S] cluster scaffold protein carrying a second [4Fe-4S](2+) cluster] + N(6)-octanoyl-L-lysyl-[protein] + 2 oxidized [2Fe-2S]-[ferredoxin] + 2 S-adenosyl-L-methionine + 4 H(+) = [[Fe-S] cluster scaffold protein] + N(6)-[(R)-dihydrolipoyl]-L-lysyl-[protein] + 4 Fe(3+) + 2 hydrogen sulfide + 2 5'-deoxyadenosine + 2 L-methionine + 2 reduced [2Fe-2S]-[ferredoxin]. Its pathway is protein modification; protein lipoylation via endogenous pathway; protein N(6)-(lipoyl)lysine from octanoyl-[acyl-carrier-protein]: step 2/2. In terms of biological role, catalyzes the radical-mediated insertion of two sulfur atoms into the C-6 and C-8 positions of the octanoyl moiety bound to the lipoyl domains of lipoate-dependent enzymes, thereby converting the octanoylated domains into lipoylated derivatives. This Koribacter versatilis (strain Ellin345) protein is Lipoyl synthase.